Consider the following 103-residue polypeptide: Putative glutaredoxin-C14 (103 aa).

A Glutaredoxin domain is found at Met1 to Trp102. An intrachain disulfide couples Cys21 to Cys24. Residues Ala100–Leu103 carry the Responsive for interaction with TGA factors motif.

This sequence belongs to the glutaredoxin family. CC-type subfamily.

The protein resides in the cytoplasm. The protein localises to the nucleus. In terms of biological role, has a glutathione-disulfide oxidoreductase activity in the presence of NADPH and glutathione reductase. Reduces low molecular weight disulfides and proteins. This Oryza sativa subsp. japonica (Rice) protein is Putative glutaredoxin-C14 (GRXC14).